We begin with the raw amino-acid sequence, 232 residues long: Large ribosomal subunit protein uL1 (232 aa).

It belongs to the universal ribosomal protein uL1 family. Part of the 50S ribosomal subunit.

Binds directly to 23S rRNA. The L1 stalk is quite mobile in the ribosome, and is involved in E site tRNA release. Its function is as follows. Protein L1 is also a translational repressor protein, it controls the translation of the L11 operon by binding to its mRNA. The sequence is that of Large ribosomal subunit protein uL1 from Porphyromonas gingivalis (strain ATCC 33277 / DSM 20709 / CIP 103683 / JCM 12257 / NCTC 11834 / 2561).